The sequence spans 396 residues: uncharacterized protein (396 aa).

Belongs to the NAD(P)-dependent epimerase/dehydratase family. The cofactor is NAD(+). It depends on NADP(+) as a cofactor.

Functionally, putative nucleotide sugar epimerase/dehydrogenase. This is an uncharacterized protein from Sinorhizobium fredii (strain NBRC 101917 / NGR234).